Consider the following 405-residue polypeptide: Tryptophan synthase beta chain (405 aa).

Lys98 is subject to N6-(pyridoxal phosphate)lysine.

It belongs to the TrpB family. As to quaternary structure, tetramer of two alpha and two beta chains. It depends on pyridoxal 5'-phosphate as a cofactor.

It carries out the reaction (1S,2R)-1-C-(indol-3-yl)glycerol 3-phosphate + L-serine = D-glyceraldehyde 3-phosphate + L-tryptophan + H2O. It functions in the pathway amino-acid biosynthesis; L-tryptophan biosynthesis; L-tryptophan from chorismate: step 5/5. In terms of biological role, the beta subunit is responsible for the synthesis of L-tryptophan from indole and L-serine. In Xanthomonas oryzae pv. oryzae (strain PXO99A), this protein is Tryptophan synthase beta chain.